A 449-amino-acid polypeptide reads, in one-letter code: Bifunctional protein GlmU (449 aa).

The interval 1-229 (MNHFAVILAA…FEETIGVNDR (229 aa)) is pyrophosphorylase. Residues 8–11 (LAAG), Lys-22, Gln-72, and 77–78 (GT) each bind UDP-N-acetyl-alpha-D-glucosamine. Residue Asp-102 participates in Mg(2+) binding. Gly-139, Glu-154, Asn-169, and Asn-227 together coordinate UDP-N-acetyl-alpha-D-glucosamine. Asn-227 is a binding site for Mg(2+). The interval 230–250 (VALAQAETSMRKRTNEHWMRQ) is linker. Residues 251–449 (GVTFIDPAST…ERQTTKPDYR (199 aa)) form an N-acetyltransferase region. UDP-N-acetyl-alpha-D-glucosamine-binding residues include Arg-332 and Lys-350. Catalysis depends on His-362, which acts as the Proton acceptor. The UDP-N-acetyl-alpha-D-glucosamine site is built by Tyr-365 and Asn-376. Acetyl-CoA contacts are provided by residues 385–386 (NY), Ala-422, and Arg-439.

This sequence in the N-terminal section; belongs to the N-acetylglucosamine-1-phosphate uridyltransferase family. In the C-terminal section; belongs to the transferase hexapeptide repeat family. As to quaternary structure, homotrimer. The cofactor is Mg(2+).

Its subcellular location is the cytoplasm. It carries out the reaction alpha-D-glucosamine 1-phosphate + acetyl-CoA = N-acetyl-alpha-D-glucosamine 1-phosphate + CoA + H(+). The enzyme catalyses N-acetyl-alpha-D-glucosamine 1-phosphate + UTP + H(+) = UDP-N-acetyl-alpha-D-glucosamine + diphosphate. It participates in nucleotide-sugar biosynthesis; UDP-N-acetyl-alpha-D-glucosamine biosynthesis; N-acetyl-alpha-D-glucosamine 1-phosphate from alpha-D-glucosamine 6-phosphate (route II): step 2/2. The protein operates within nucleotide-sugar biosynthesis; UDP-N-acetyl-alpha-D-glucosamine biosynthesis; UDP-N-acetyl-alpha-D-glucosamine from N-acetyl-alpha-D-glucosamine 1-phosphate: step 1/1. It functions in the pathway bacterial outer membrane biogenesis; LPS lipid A biosynthesis. Catalyzes the last two sequential reactions in the de novo biosynthetic pathway for UDP-N-acetylglucosamine (UDP-GlcNAc). The C-terminal domain catalyzes the transfer of acetyl group from acetyl coenzyme A to glucosamine-1-phosphate (GlcN-1-P) to produce N-acetylglucosamine-1-phosphate (GlcNAc-1-P), which is converted into UDP-GlcNAc by the transfer of uridine 5-monophosphate (from uridine 5-triphosphate), a reaction catalyzed by the N-terminal domain. This chain is Bifunctional protein GlmU, found in Exiguobacterium sibiricum (strain DSM 17290 / CCUG 55495 / CIP 109462 / JCM 13490 / 255-15).